Consider the following 576-residue polypeptide: NADH-quinone oxidoreductase subunit C/D (576 aa).

Residues 1–176 are NADH dehydrogenase I subunit C; it reads MAWISLEKAK…NLEGLFNYDR (176 aa). The tract at residues 200–576 is NADH dehydrogenase I subunit D; that stretch reads SQIVLNWGPL…IDPVVGETDR (377 aa).

It in the N-terminal section; belongs to the complex I 30 kDa subunit family. The protein in the C-terminal section; belongs to the complex I 49 kDa subunit family. NDH-1 is composed of 13 different subunits. Subunits NuoB, CD, E, F, and G constitute the peripheral sector of the complex.

The protein resides in the cell inner membrane. It catalyses the reaction a quinone + NADH + 5 H(+)(in) = a quinol + NAD(+) + 4 H(+)(out). In terms of biological role, NDH-1 shuttles electrons from NADH, via FMN and iron-sulfur (Fe-S) centers, to quinones in the respiratory chain. The immediate electron acceptor for the enzyme in this species is believed to be ubiquinone. Couples the redox reaction to proton translocation (for every two electrons transferred, four hydrogen ions are translocated across the cytoplasmic membrane), and thus conserves the redox energy in a proton gradient. The polypeptide is NADH-quinone oxidoreductase subunit C/D (Sulfurihydrogenibium sp. (strain YO3AOP1)).